Here is a 93-residue protein sequence, read N- to C-terminus: Small ribosomal subunit protein uS19 (93 aa).

Belongs to the universal ribosomal protein uS19 family.

Protein S19 forms a complex with S13 that binds strongly to the 16S ribosomal RNA. The polypeptide is Small ribosomal subunit protein uS19 (Salinispora tropica (strain ATCC BAA-916 / DSM 44818 / JCM 13857 / NBRC 105044 / CNB-440)).